A 114-amino-acid chain; its full sequence is Small ribosomal subunit protein bS6 (114 aa).

It belongs to the bacterial ribosomal protein bS6 family.

Its function is as follows. Binds together with bS18 to 16S ribosomal RNA. This Hydrogenovibrio crunogenus (strain DSM 25203 / XCL-2) (Thiomicrospira crunogena) protein is Small ribosomal subunit protein bS6.